Consider the following 982-residue polypeptide: Dual specificity protein kinase Ttk (982 aa).

Disordered regions lie at residues 178-204 (LSHEDKENLSVSALDHTQGSRRSDGTC), 211-230 (TFLHSDQKFSPQEENGPVWR), and 493-574 (AEHQ…PLRL). A compositionally biased stretch (polar residues) spans 211 to 223 (TFLHSDQKFSPQE). The segment covering 510-533 (MKREENPVKAPEDHQKPFSKETSS) has biased composition (basic and acidic residues). A Protein kinase domain is found at 653-916 (FFIFKMIGRG…IAELLDHPYL (264 aa)). ATP contacts are provided by residues 659-667 (IGRGGSSKV) and Lys-681. Asp-775 acts as the Proton acceptor in catalysis.

This sequence belongs to the protein kinase superfamily. Ser/Thr protein kinase family. Mg(2+) serves as cofactor. In terms of tissue distribution, barely detectable in adult somatic tissues. Expressed in immature germ cells that have not completed meiosis. In ovary, expressed predominantly in previtellogenic oocytes. In testis, expressed in primary and secondary spermatocytes, but not mature spermatozoa.

It carries out the reaction L-seryl-[protein] + ATP = O-phospho-L-seryl-[protein] + ADP + H(+). The catalysed reaction is L-threonyl-[protein] + ATP = O-phospho-L-threonyl-[protein] + ADP + H(+). The enzyme catalyses L-tyrosyl-[protein] + ATP = O-phospho-L-tyrosyl-[protein] + ADP + H(+). In terms of biological role, involved in mitotic spindle assembly checkpoint signaling, a process that delays anaphase until chromosomes are bioriented on the spindle, and in the repair of incorrect mitotic kinetochore-spindle microtubule attachments. Required to prevent chromosome segregation errors during meiosis. Required for fin and heart regeneration. The protein is Dual specificity protein kinase Ttk (ttk) of Danio rerio (Zebrafish).